We begin with the raw amino-acid sequence, 73 residues long: Kappa-scoloptoxin SsmTx-I (73 aa).

The first 25 residues, 1-25 (MMMMFSVVSVFLMLLLLKFHDLSMG), serve as a signal peptide directing secretion. The propeptide occupies 26–37 (EEISLLKKVVRR). Cystine bridges form between Cys45–Cys56 and Cys50–Cys63.

Belongs to the scoloptoxin-04 family. Expressed by the venom gland.

It localises to the secreted. In terms of biological role, exhibits highly specific blockage of Kv2.1/KCNB1 (IC(50)=41.7 nM) voltage-gated potassium channels. This blockage is not associated with a significant change in steady-state activation, suggesting that this toxin acts as a channel blocker rather than a gating-modifier. Shows potential analgesic activities in formalin-induced paw licking, thermal pain, and acetic acid-induced abdominal writhing mice models. This chain is Kappa-scoloptoxin SsmTx-I, found in Scolopendra mutilans (Chinese red-headed centipede).